The primary structure comprises 76 residues: uORF2 protein (76 aa).

Functionally, plays a role in viral replication. In Homo sapiens (Human), this protein is uORF2 protein.